The primary structure comprises 227 residues: Phosphoribosylformylglycinamidine synthase subunit PurQ (227 aa).

Residues 3–225 (FAVIVFPGSN…LKQWRETYVV (223 aa)) form the Glutamine amidotransferase type-1 domain. Cysteine 86 (nucleophile) is an active-site residue. Residues histidine 194 and glutamate 196 contribute to the active site.

In terms of assembly, part of the FGAM synthase complex composed of 1 PurL, 1 PurQ and 2 PurS subunits.

It is found in the cytoplasm. The catalysed reaction is N(2)-formyl-N(1)-(5-phospho-beta-D-ribosyl)glycinamide + L-glutamine + ATP + H2O = 2-formamido-N(1)-(5-O-phospho-beta-D-ribosyl)acetamidine + L-glutamate + ADP + phosphate + H(+). The enzyme catalyses L-glutamine + H2O = L-glutamate + NH4(+). It participates in purine metabolism; IMP biosynthesis via de novo pathway; 5-amino-1-(5-phospho-D-ribosyl)imidazole from N(2)-formyl-N(1)-(5-phospho-D-ribosyl)glycinamide: step 1/2. Functionally, part of the phosphoribosylformylglycinamidine synthase complex involved in the purines biosynthetic pathway. Catalyzes the ATP-dependent conversion of formylglycinamide ribonucleotide (FGAR) and glutamine to yield formylglycinamidine ribonucleotide (FGAM) and glutamate. The FGAM synthase complex is composed of three subunits. PurQ produces an ammonia molecule by converting glutamine to glutamate. PurL transfers the ammonia molecule to FGAR to form FGAM in an ATP-dependent manner. PurS interacts with PurQ and PurL and is thought to assist in the transfer of the ammonia molecule from PurQ to PurL. The protein is Phosphoribosylformylglycinamidine synthase subunit PurQ of Bacillus cereus (strain B4264).